Reading from the N-terminus, the 670-residue chain is DNA ligase (670 aa).

NAD(+) is bound by residues 32–36 (DSEYD), 81–82 (SL), and Glu114. The N6-AMP-lysine intermediate role is filled by Lys116. Residues Arg137, Glu174, Lys291, and Lys315 each contribute to the NAD(+) site. Zn(2+)-binding residues include Cys409, Cys412, Cys427, and Cys433. The 79-residue stretch at 592-670 (ASENLFKDKT…EEEFLAQITR (79 aa)) folds into the BRCT domain.

It belongs to the NAD-dependent DNA ligase family. LigA subfamily. Mg(2+) is required as a cofactor. It depends on Mn(2+) as a cofactor.

The enzyme catalyses NAD(+) + (deoxyribonucleotide)n-3'-hydroxyl + 5'-phospho-(deoxyribonucleotide)m = (deoxyribonucleotide)n+m + AMP + beta-nicotinamide D-nucleotide.. In terms of biological role, DNA ligase that catalyzes the formation of phosphodiester linkages between 5'-phosphoryl and 3'-hydroxyl groups in double-stranded DNA using NAD as a coenzyme and as the energy source for the reaction. It is essential for DNA replication and repair of damaged DNA. This chain is DNA ligase, found in Haemophilus influenzae (strain PittEE).